The following is a 147-amino-acid chain: MRLMGFDVGSRTVGIAVSDLFGWTAQGVEIIRINEDESEFGLDRVKELVAQHQVTGFVLGLPKNMNNSIGPRAVKAQEYGAMLTELFPEIPVDYIDERLTTVQAERMLVEQADTSRKKRKQVIDKLAAVMILQNYLDAKGPLTKQGY.

Belongs to the YqgF nuclease family.

Its subcellular location is the cytoplasm. In terms of biological role, could be a nuclease involved in processing of the 5'-end of pre-16S rRNA. This is Putative pre-16S rRNA nuclease from Latilactobacillus sakei subsp. sakei (strain 23K) (Lactobacillus sakei subsp. sakei).